We begin with the raw amino-acid sequence, 249 residues long: NAD(P)H-hydrate epimerase (249 aa).

The region spanning alanine 11 to isoleucine 233 is the YjeF N-terminal domain. Asparagine 62–aspartate 66 is a binding site for (6S)-NADPHX. The K(+) site is built by glutamine 63 and aspartate 127. (6S)-NADPHX-binding positions include glycine 131–proline 137 and aspartate 162. Serine 165 contacts K(+).

This sequence belongs to the NnrE/AIBP family. Requires K(+) as cofactor.

The protein localises to the cytoplasm. The protein resides in the mitochondrion. It catalyses the reaction (6R)-NADHX = (6S)-NADHX. It carries out the reaction (6R)-NADPHX = (6S)-NADPHX. Functionally, catalyzes the epimerization of the S- and R-forms of NAD(P)HX, a damaged form of NAD(P)H that is a result of enzymatic or heat-dependent hydration. This is a prerequisite for the S-specific NAD(P)H-hydrate dehydratase to allow the repair of both epimers of NAD(P)HX. In Cryptococcus neoformans var. neoformans serotype D (strain JEC21 / ATCC MYA-565) (Filobasidiella neoformans), this protein is NAD(P)H-hydrate epimerase.